A 247-amino-acid polypeptide reads, in one-letter code: ATP synthase subunit a, chloroplastic (247 aa).

5 helical membrane passes run 38–58 (QVLI…VIAV), 95–115 (VPFI…GALL), 134–154 (INTT…AGLS), 199–219 (LVVV…VMFL), and 220–240 (GLFT…AYIG).

The protein belongs to the ATPase A chain family. As to quaternary structure, F-type ATPases have 2 components, CF(1) - the catalytic core - and CF(0) - the membrane proton channel. CF(1) has five subunits: alpha(3), beta(3), gamma(1), delta(1), epsilon(1). CF(0) has four main subunits: a, b, b' and c.

The protein localises to the plastid. It is found in the chloroplast thylakoid membrane. Its function is as follows. Key component of the proton channel; it plays a direct role in the translocation of protons across the membrane. The polypeptide is ATP synthase subunit a, chloroplastic (Lolium perenne (Perennial ryegrass)).